A 505-amino-acid chain; its full sequence is DEAD-box ATP-dependent RNA helicase 38 (505 aa).

A disordered region spans residues 1–81 (MADGGKPPTP…DQGPPLLDDS (81 aa)). The segment covering 27–44 (KAAAAAEAASSSSSNEPA) has biased composition (low complexity). Residues 100 to 129 (AAFEDLKLTPELLKGLHDEMGFSRPSKIQA) carry the Q motif motif. The region spanning 134–310 (MILTPPYKDL…TRVIKDGNQI (177 aa)) is the Helicase ATP-binding domain. 147-154 (AHNGSGKT) provides a ligand contact to ATP. Positions 254-257 (DEAD) match the DEAD box motif. The region spanning 338-493 (VIKDKIFEFG…EVRNWQSEED (156 aa)) is the Helicase C-terminal domain.

This sequence belongs to the DEAD box helicase family. DDX19/DBP5 subfamily.

The protein resides in the cytoplasm. The protein localises to the nucleus. The catalysed reaction is ATP + H2O = ADP + phosphate + H(+). Its function is as follows. ATP-dependent RNA helicase essential for mRNA export from the nucleus. Plays an important role in the positive regulation of CBF/DREB transcription factors. The sequence is that of DEAD-box ATP-dependent RNA helicase 38 from Oryza sativa subsp. japonica (Rice).